Reading from the N-terminus, the 547-residue chain is Probable high-affinity hexose transporter ght8, mitochondrial (547 aa).

The N-terminal 21 residues, Met1–Gly21, are a transit peptide targeting the mitochondrion. Residues Ala22–Arg86 are Mitochondrial intermembrane-facing. A helical transmembrane segment spans residues Val87–Val107. The Cytoplasmic portion of the chain corresponds to Pro108–Gln112. The chain crosses the membrane as a helical span at residues Ile113 to Gly133. Topologically, residues Phe134–Arg144 are mitochondrial intermembrane. Residues Gly145–Ile165 form a helical membrane-spanning segment. Topologically, residues Asn166 to Arg179 are cytoplasmic. A helical transmembrane segment spans residues Val180 to Pro200. Residues Glu201–Ala304 are Mitochondrial intermembrane-facing. The chain crosses the membrane as a helical span at residues Leu305 to Phe325. Residues Gly326–Arg328 are Cytoplasmic-facing. A helical transmembrane segment spans residues Met329–Gly349. Residues Asn350 to Arg363 lie on the Mitochondrial intermembrane side of the membrane. A helical transmembrane segment spans residues Ala364–Gly384. Residues Pro385 to Ala404 lie on the Cytoplasmic side of the membrane. The chain crosses the membrane as a helical span at residues Ala405–Ile425. Over Ser426–Lys432 the chain is Mitochondrial intermembrane. Residues Tyr433–His453 traverse the membrane as a helical segment. The Cytoplasmic segment spans residues Glu454–Ala547. The interval Gly482–Ala547 is disordered. The segment covering Thr517–Ser529 has biased composition (low complexity). Position 519 is a phosphoserine (Ser519). A phosphothreonine mark is found at Thr523 and Thr526. A phosphoserine mark is found at Ser527, Ser528, Ser529, and Ser537.

The protein belongs to the major facilitator superfamily. Sugar transporter (TC 2.A.1.1) family.

The protein localises to the mitochondrion membrane. The polypeptide is Probable high-affinity hexose transporter ght8, mitochondrial (ght8) (Schizosaccharomyces pombe (strain 972 / ATCC 24843) (Fission yeast)).